We begin with the raw amino-acid sequence, 796 residues long: MKHKLDVTINELRLKSIRKIVKRINTWSDEVKSYSDDVLKQKTLEFKERIASGVDTLDTLLPEAYAVAREASWRVLGMYPKEVQLIGAIVLHEGNIAEMQTGEGKTLTATMPLYLNALSGKGTYLITTNDYLAKRDFEEMQPLYEWLGLTASLGFVDIVDYEYQKGEKRNIYEHDIIYTTNGRLGFDYLIDNLADSAEGKFLPQLNYGIIDEVDSIILDAAQTPLVISGAPRLQSNLFHIVKEFVDTLIEDVHFKMKKTKKEIWLLNQGIEAAQSYFNVEDLYSEQAMVLVRNINLALRAQYLFESNVDYFVYNGDIVLIDRITGRMLPGTKLQAGLHQAIEAKEGMEVSTDKSVMATITFQNLFKLFESFSGMTATGKLGESEFFDLYSKIVVQVPTDKAIQRIDEPDKVFRSVDEKNIAMIHDIVELHETGRPVLLITRTAEAAEYFSKVFFQMDIPNNLLIAQNVAKEAQMIAEAGQIGSMTVATSMAGRGTDIKLGEGVEALGGLAVIIHEHMENSRVDRQLRGRSGRQGDPGSSCIYISLDDYLVKRWSDSNLAENNQLYSLDAQRLSQSSLFNRKVKQIVVKAQRISEEQGVKAREMANEFEKSISIQRDLVYEERNRVLEIDDAENRDFKVLAKDVFEMFVNEEKVLTKSRVVEYIYQNLSFQFNKDVACVNFKDKQAVVTFLLEQFEKQIALNRKNMQSAYYYNIFVQKVFLKAIDSCWLEQVDYLQQLKANVNQRQNGQRNAIFEYHRVALDSFEVMTRNIKKRMVKNICQSMITFDKEGMPVIHFP.

Residues glutamine 84, 102-106, and aspartate 496 each bind ATP; that span reads GEGKT.

This sequence belongs to the SecA family. In terms of assembly, monomer and homodimer. Part of the essential Sec protein translocation apparatus which comprises SecA, SecYEG and auxiliary proteins SecDF. Other proteins may also be involved.

The protein resides in the cell membrane. The protein localises to the cytoplasm. The enzyme catalyses ATP + H2O + cellular proteinSide 1 = ADP + phosphate + cellular proteinSide 2.. Its function is as follows. Part of the Sec protein translocase complex. Interacts with the SecYEG preprotein conducting channel. Has a central role in coupling the hydrolysis of ATP to the transfer of proteins into and across the cell membrane, serving as an ATP-driven molecular motor driving the stepwise translocation of polypeptide chains across the membrane. The sequence is that of Protein translocase subunit SecA 2 from Staphylococcus aureus (strain MRSA252).